The following is a 458-amino-acid chain: MVQITEVKENQSSRESRTAAHTHIKGLGLNEQGIAKPIEGGFVGQNEAREACGIIVDLIKSKKMSGKAVLIAGPPATGKTALALAISQELGPKVPFCPIVGSELYSAEVKKTSALMENFRRAIGLRIKETKEVYEGEVIELTPEEAENPLGGYGKTISHVIVGLKSAKGTKTLRLDPVIYESIQKERVTIGDVIYIEANTGAVKRVGRSDAYATEFDLEAEEYVPLPKGEVHKKKEIVQDVTLHDLDVANARPQGGQDVLSMMGQLLKPKKTEITDKLRTEVNKVVSKYIEQGVAELVPGVLFIDEVNMLDMEIFTYLNRALESSIAPIVVLASNRGLTTVRGSDDGVKAPHGCPPDLIDRLLIVRTLPYNQEEIKTIIGKRASLEGLTLTDDALEKLSKQGLTTSLRYAVQLLTPAGVLSTTAGRSEITVQDIEECEFLFLDSRRSTKVLQETKTFL.

Over residues 1 to 18 (MVQITEVKENQSSRESRT) the composition is skewed to basic and acidic residues. The segment at 1 to 20 (MVQITEVKENQSSRESRTAA) is disordered. 73–80 (GPPATGKT) contacts ATP.

Belongs to the RuvB family. May form heterododecamers with RVB2. Component of the SWR1 chromatin remodeling complex, the INO80 chromatin remodeling complex, and of the R2TP complex.

The protein resides in the nucleus. The catalysed reaction is ATP + H2O = ADP + phosphate + H(+). Functionally, DNA helicase which participates in several chromatin remodeling complexes, including the SWR1 and the INO80 complexes. The SWR1 complex mediates the ATP-dependent exchange of histone H2A for the H2A variant HZT1 leading to transcriptional regulation of selected genes by chromatin remodeling. The INO80 complex remodels chromatin by shifting nucleosomes and is involved in DNA repair. Also involved in pre-rRNA processing. This Candida albicans (strain SC5314 / ATCC MYA-2876) (Yeast) protein is RuvB-like helicase 1 (RVB1).